Here is a 527-residue protein sequence, read N- to C-terminus: uncharacterized protein (527 aa).

Disordered regions lie at residues 1–49 (MSSF…IKDE), 99–307 (DFNF…ATTT), 319–353 (TEINNNNSNSNNLPSIPIGNEKSKINDNQDEEDEN), and 382–419 (YINNDDGDDDDDDDENENENDSQPEEEYEENKQQQQQE). Over residues 8 to 17 (YDDESEEEDN) the composition is skewed to acidic residues. 2 stretches are compositionally biased toward low complexity: residues 18-44 (NNNNNNNNNNNNNNIINNNNNNNNSNN) and 99-115 (DFNFYNNNNNSNSNSNN). Over residues 141 to 150 (NEFRNPDLKN) the composition is skewed to basic and acidic residues. Composition is skewed to low complexity over residues 167 to 178 (SSQNTTTTQQSS) and 186 to 222 (NNNNNNNNNNNNNNNNNNNNNNNNNNNNNNNNNNSNN). The segment covering 229 to 248 (DDKSKKINENENTVNKKDNI) has biased composition (basic and acidic residues). Residues 283–296 (LRKKLLKNQPKTKK) show a composition bias toward basic residues. Low complexity-rich tracts occupy residues 297-307 (STTTTTTATTT) and 319-330 (TEINNNNSNSNN). A compositionally biased stretch (acidic residues) spans 386–410 (DDGDDDDDDDENENENDSQPEEEYE).

This is an uncharacterized protein from Dictyostelium discoideum (Social amoeba).